The primary structure comprises 216 residues: Endo-1,4-beta-xylanase 1 (216 aa).

An N-terminal signal peptide occupies residues 1–19 (MFLTSVVSLVVGAISCVSA). Residues 29-216 (QMTPRNSCYG…SSGSASITVS (188 aa)) form the GH11 domain. The Nucleophile role is filled by glutamate 112. The active-site Proton donor is glutamate 203.

It belongs to the glycosyl hydrolase 11 (cellulase G) family.

Its subcellular location is the secreted. The enzyme catalyses Endohydrolysis of (1-&gt;4)-beta-D-xylosidic linkages in xylans.. Its pathway is glycan degradation; xylan degradation. Its function is as follows. Endo-1,4-beta-xylanase involved in the hydrolysis of xylan, a major structural heterogeneous polysaccharide found in plant biomass representing the second most abundant polysaccharide in the biosphere, after cellulose. The protein is Endo-1,4-beta-xylanase 1 (xyl1) of Claviceps purpurea (Ergot fungus).